Here is an 834-residue protein sequence, read N- to C-terminus: MTDMKIDRRQMLKLEAAAIAAAAAGMPSTSLAANLVTEREASELKWDKAACRFCGTGCSVMVATKDNRVVATHGDIKAEVNRGLNCVKGYFLSKIMYGHDRLTHPMLRKTNGKYDKNGEFTPVSWDEAFDIMALKFKDALKKRGPSGVGMFGSGQWTIWEGYAASKLFKAGFRTNNIDPNARHCMASAVAGMMRTFGIDEPAGCYDDIEAADAFVLWGSNMAEMHPILWTRVTDRRLSAPHVKVAVLSTFEHRSFDLADIGMVFKPQTDLYLLNAIANHIIKTGRVNKDFVQAHTVFKKGQTDIGYGLRPEHPLQKKATGAAKANDATDISFDEYAKFVSDYTLEKAAEMSGVPLNRLEALAELYADPKTKVVSFWTMGFNQHTRGVWCNNLVYNIHLLTGKIAEAGNSPFSLTGQPSACGTAREVGTFSHRLPADMVVTNKEHRTKAEHIWQLPEGTIPDKPGYHAVLQSRMLKDGLLNAYWVQVNNNLQAGPNANEETYPGFRNPDNFIVVSDAYPSVTALAADLILPTAMWVEKEGAYGNAERRTQFWHQLVSAPGEARSDLWQLMEFSKRFKIEEVWPEELIAKKPDVRGKTLFDVLYKNGQVDKFPLDQIEAGYANDESKAFGFYVHKGLFEEYAAFGRGHGHDLAPFEAYHKERGLRWPVVDGKETRWRFREGSDPYVKAGTGVQFYGFPDGKARIFALPYEPPAESPDKDYPFWLSTGRVVEHWHSGTMTRRVPELYKAFPEAVCFMHPDDAQEANLRRGDEVKVASRRGFIRARVETRGRDKPPRGLVFVPWFDESKLINKVTLDATDPISLQTDYKKCAVRIERV.

The segment at residues 1–32 is a signal peptide (tat-type signal); the sequence is MTDMKIDRRQMLKLEAAAIAAAAAGMPSTSLA. Positions 44–100 constitute a 4Fe-4S Mo/W bis-MGD-type domain; the sequence is LKWDKAACRFCGTGCSVMVATKDNRVVATHGDIKAEVNRGLNCVKGYFLSKIMYGHD. [4Fe-4S] cluster contacts are provided by cysteine 51, cysteine 54, cysteine 58, and cysteine 86. Residues lysine 88, glutamine 155, asparagine 180, cysteine 184, 217–224, 248–252, 267–269, methionine 378, glutamine 382, asparagine 488, 514–515, lysine 537, aspartate 564, and 724–733 contribute to the Mo-bis(molybdopterin guanine dinucleotide) site; these read WGSNMAEM, STFEH, QTD, SD, and TGRVVEHWHS. Tryptophan 800 contacts substrate. Residues asparagine 808 and lysine 825 each contribute to the Mo-bis(molybdopterin guanine dinucleotide) site.

It belongs to the prokaryotic molybdopterin-containing oxidoreductase family. NasA/NapA/NarB subfamily. In terms of assembly, component of the periplasmic nitrate reductase NapAB complex composed of NapA and NapB. The cofactor is [4Fe-4S] cluster. Mo-bis(molybdopterin guanine dinucleotide) serves as cofactor. In terms of processing, predicted to be exported by the Tat system. The position of the signal peptide cleavage has not been experimentally proven.

Its subcellular location is the periplasm. The enzyme catalyses 2 Fe(II)-[cytochrome] + nitrate + 2 H(+) = 2 Fe(III)-[cytochrome] + nitrite + H2O. Its function is as follows. Catalytic subunit of the periplasmic nitrate reductase complex NapAB. Receives electrons from NapB and catalyzes the reduction of nitrate to nitrite. The chain is Periplasmic nitrate reductase from Bradyrhizobium sp. (strain BTAi1 / ATCC BAA-1182).